The sequence spans 447 residues: NADP-specific glutamate dehydrogenase (447 aa).

The substrate site is built by K92, Q113, and K116. The active-site Proton donor is K128. G167 lines the substrate pocket. Residues T211 and N242 each coordinate NADP(+). A substrate-binding site is contributed by S380.

It belongs to the Glu/Leu/Phe/Val dehydrogenases family. In terms of assembly, homohexamer.

It catalyses the reaction L-glutamate + NADP(+) + H2O = 2-oxoglutarate + NH4(+) + NADPH + H(+). Its function is as follows. Catalyzes the reversible oxidative deamination of glutamate to alpha-ketoglutarate and ammonia. The polypeptide is NADP-specific glutamate dehydrogenase (gdhA) (Salmonella typhi).